The following is a 397-amino-acid chain: Ribosomal RNA large subunit methyltransferase I (397 aa).

The PUA domain maps to 2-79 (TAAIYLVKGR…KEEINKAFFV (78 aa)).

It belongs to the methyltransferase superfamily. RlmI family.

The protein localises to the cytoplasm. The catalysed reaction is cytidine(1962) in 23S rRNA + S-adenosyl-L-methionine = 5-methylcytidine(1962) in 23S rRNA + S-adenosyl-L-homocysteine + H(+). In terms of biological role, specifically methylates the cytosine at position 1962 (m5C1962) of 23S rRNA. The polypeptide is Ribosomal RNA large subunit methyltransferase I (Vibrio parahaemolyticus serotype O3:K6 (strain RIMD 2210633)).